We begin with the raw amino-acid sequence, 879 residues long: Phosphoenolpyruvate carboxylase (879 aa).

Active-site residues include H138 and K545.

It belongs to the PEPCase type 1 family. Requires Mg(2+) as cofactor.

It catalyses the reaction oxaloacetate + phosphate = phosphoenolpyruvate + hydrogencarbonate. Its function is as follows. Forms oxaloacetate, a four-carbon dicarboxylic acid source for the tricarboxylic acid cycle. This Haemophilus influenzae (strain 86-028NP) protein is Phosphoenolpyruvate carboxylase.